A 1497-amino-acid polypeptide reads, in one-letter code: Polyunsaturated fatty acid synthase subunit C (1497 aa).

Dehydratase (DH) domain stretches follow at residues 271-422 (YKLC…DYGK) and 797-937 (QGQY…RVRI). Positions 944–958 (ASSSASSVGSSASAE) are enriched in low complexity. The tract at residues 944-977 (ASSSASSVGSSASAEVAERTRSKAAPQPVASGPA) is disordered. The tract at residues 1026 to 1470 (LGDLGDRSFM…ILRGACYLRR (445 aa)) is enoylreductase (ER) domain.

Belongs to the thioester dehydratase family. FabA subfamily. Component of the polyunsaturated fatty acid synthase complex composed of at least ORF-A, ORF-B and ORF-C.

The protein operates within lipid metabolism; fatty acid biosynthesis. Functionally, polyketide synthase-like protein; part of the polyunsaturated fatty acid synthase composed of the 3 PKS-like subunits A, B and C. While the saturated fatty acids (SFAs) in Thraustochytrium are produced by the conventional fatty acid synthase (FAS) pathway, polyunsaturated fatty acids (PUFAs) including docosahexeanoic acid (DHA) and docosapentaenoic acid (DPA) are synthesized via an anaerobical PKS pathway. PUFA synthase assimilates fatty acyl-CoA, the product of FAS, as the starter unit to synthesize DPA, and this starter unit may be butyryl-CoA, hexanoyl-CoA, or octanoyl-CoA. DPA and DHA biosynthesis seem to differ by the reduction at the N-3 position by PUFA synthase, not the extension of carbon chain. In DHA biosynthesis, PUFA synthase extends the fatty acyl chain from the methyl toward the carboxyl end, and the double bond is formed when the carbon chain is growing, instead of afterward. Therefore, PUFA synthase is unable to transform DPA to DHA, suggesting that DPA is not the precursor of DHA. Moreover, DPA molecule is partly extended by FAS KS domain, so DPA biosynthesis is less dependent on PUFA synthase KS domain than DHA. In Thraustochytrium sp. (strain ATCC 26185 / S-3), this protein is Polyunsaturated fatty acid synthase subunit C.